The primary structure comprises 70 residues: Brevinin-1S (70 aa).

A signal peptide spans 1–22; it reads MFTLKKSLLLLFFLGTINLSLC. Positions 23-44 are excised as a propeptide; sequence EEERNAEEERRDDPEERDVEVE. Cys64 and Cys70 form a disulfide bridge.

Belongs to the frog skin active peptide (FSAP) family. Brevinin subfamily. As to expression, expressed by the skin glands.

The protein resides in the secreted. In terms of biological role, antimicrobial peptide. The polypeptide is Brevinin-1S (Odorrana schmackeri (Schmacker's frog)).